The primary structure comprises 200 residues: MAASAGPEIERLIALLSKLPGLGPRSGRRAALALLKKRDTLLAPLTAALVDAQAKVRTCSVCGSLDTSDPCAICSDAARDNRLLCVVEEVGSLWAMERGGSFKGRYHVLGGLLSALDGVGPEALRVGELLGRAKGGEVSEVILALPATVDGQTTAHYLADRLAPTGVSVTMLARGVPVGGDLDWLDDGTIAQALRARRPA.

The segment at 59–74 (CSVCGSLDTSDPCAIC) adopts a C4-type zinc-finger fold. In terms of domain architecture, Toprim spans 82–177 (RLLCVVEEVG…SVTMLARGVP (96 aa)).

It belongs to the RecR family.

May play a role in DNA repair. It seems to be involved in an RecBC-independent recombinational process of DNA repair. It may act with RecF and RecO. The chain is Recombination protein RecR from Caulobacter sp. (strain K31).